A 298-amino-acid chain; its full sequence is GTP cyclohydrolase FolE2 (298 aa).

The protein belongs to the GTP cyclohydrolase IV family.

It carries out the reaction GTP + H2O = 7,8-dihydroneopterin 3'-triphosphate + formate + H(+). The protein operates within cofactor biosynthesis; 7,8-dihydroneopterin triphosphate biosynthesis; 7,8-dihydroneopterin triphosphate from GTP: step 1/1. Functionally, converts GTP to 7,8-dihydroneopterin triphosphate. This Pseudomonas fluorescens (strain SBW25) protein is GTP cyclohydrolase FolE2.